Consider the following 425-residue polypeptide: O-methyltransferase AMT9 (425 aa).

Residues 257 to 258 (GG), Asp280, 306 to 307 (DF), Arg322, and Arg323 contribute to the S-adenosyl-L-methionine site. His326 serves as the catalytic Proton acceptor.

It belongs to the class I-like SAM-binding methyltransferase superfamily. Cation-independent O-methyltransferase family.

It participates in mycotoxin biosynthesis. O-methyltransferase; part of the gene clusters that mediate the biosynthesis of AM-toxins, host-selective toxins (HSTs) causing Alternaria blotch on apple, a worldwide distributed disease. AM-toxins are cyclic depsipeptides containing the 3 residues 2-hydroxy-isovaleric acid (2-HIV), dehydroalanine, L-alanine which are common for all 3 AM-toxins I to III. The fourth precursor is L-alpha-amino-methoxyphenyl-valeric acid (L-Amv) for AM-toxin I, L-alpha-amino-phenyl-valeric acid (L-Apv) for AM-toxin II, and L-alpha-amino-hydroxyphenyl-valeric acid (L-Ahv) for AM-toxin III. AM-toxins have two target sites for affecting susceptible apple cells; they cause invagination of the plasma membrane and electrolyte loss and chloroplast disorganization. The non-ribosomal peptide synthetase AMT1 contains 4 catalytic modules and is responsible for activation of each residue in AM-toxin. The aldo-keto reductase AMT2 catalyzes the conversion of 2-keto-isovaleric acid (2-KIV) to 2-hydroxy-isovaleric acid (2-HIV), one of the precursor residues incorporated by AMT1 during AM-toxin biosynthesis, by reduction of its ketone to an alcohol. The cytochrome P450 monooxygenase AMT3 and the thioesterase AMT4 are also important for AM-toxin production, but their exact function within the AM-toxin biosynthesis are not known yet. Up to 21 proteins (including AMT1 to AMT4) are predicted to be involved in AM-toxin biosynthesis since their expression ishighly up-regulated in AM-toxin-producing cultures. The polypeptide is O-methyltransferase AMT9 (Alternaria alternata (Alternaria rot fungus)).